The chain runs to 634 residues: MRGLLLAGALALPASVFAHPAHQSYGLNRRTVDLNAFRLKSLAKYVNATETVIEAPSSFAPFKQQSYVEAATQHVKMIAPDATFRVVDDHYVGDNGVAHVHFRQTANGLDIDNADFNVNVGKDGKVFSYGNSFYTGQIPSSAALTKRDFSDPVTALKGTTNTLQLPITVDSASSESTEGKESYVFKGVSGTVSDPKANLVYFVKDDGTLALTWRVETDIDSNWLLTYIDAKSGEQIHGVVDYVAEADYQVYAWGINDPTEGERTVVKDPWDSAASEFTWISDGSTKYTTSRGNNGIAQSNPNGGSSYLNNYRPSSSSLSFKYPYSPSSSPPSSYIDASIIQLFYTANTYHDLLYTLGFNEKAGNFEYNTNGQGGRGNDYVILNAQDGSGTNNANFATPPDGQPGRMRMYVWTESTPYRDGSFEAGIVIHEYTHGLSTRLTGGPANSNCLNALESGGMGEGWGDFMATAIRLKPGDKRSTDYTMGEWAANRPGGIRQYPYSTSMSTNPLTYTSVNSLNAVHAIGTVWATMLYEVMWNLIDKHGKNDAPKPTLRDGVPTDGKYLAMKLVIDGMALQPCNPNFVQARDAILDADTALTGGENQCEIWKAFAKRGLGAGAQYSSRNRVGSTEVPSGVC.

The first 18 residues, 1–18 (MRGLLLAGALALPASVFA), serve as a signal peptide directing secretion. Positions 19–245 (HPAHQSYGLN…IHGVVDYVAE (227 aa)) are excised as a propeptide. His-429 is a Zn(2+) binding site. Residue Glu-430 is part of the active site. Zn(2+) is bound at residue His-433.

Belongs to the peptidase M36 family. The cofactor is Zn(2+).

The protein resides in the secreted. In terms of biological role, secreted metalloproteinase that allows assimilation of proteinaceous substrates and probably acts as a virulence factor. This Neosartorya fischeri (strain ATCC 1020 / DSM 3700 / CBS 544.65 / FGSC A1164 / JCM 1740 / NRRL 181 / WB 181) (Aspergillus fischerianus) protein is Extracellular metalloproteinase MEP (MEP).